The chain runs to 271 residues: Formamidopyrimidine-DNA glycosylase (271 aa).

Pro-2 functions as the Schiff-base intermediate with DNA in the catalytic mechanism. Residue Glu-3 is the Proton donor of the active site. The active-site Proton donor; for beta-elimination activity is Lys-58. The DNA site is built by His-91, Arg-110, and Arg-152. The segment at 237 to 271 adopts an FPG-type zinc-finger fold; that stretch reads NVYGRGGKACKKCRKPLTEKKLGQRTTVYCTHCQK. Catalysis depends on Arg-261, which acts as the Proton donor; for delta-elimination activity.

It belongs to the FPG family. Monomer. Zn(2+) is required as a cofactor.

The catalysed reaction is Hydrolysis of DNA containing ring-opened 7-methylguanine residues, releasing 2,6-diamino-4-hydroxy-5-(N-methyl)formamidopyrimidine.. The enzyme catalyses 2'-deoxyribonucleotide-(2'-deoxyribose 5'-phosphate)-2'-deoxyribonucleotide-DNA = a 3'-end 2'-deoxyribonucleotide-(2,3-dehydro-2,3-deoxyribose 5'-phosphate)-DNA + a 5'-end 5'-phospho-2'-deoxyribonucleoside-DNA + H(+). Its function is as follows. Involved in base excision repair of DNA damaged by oxidation or by mutagenic agents. Acts as a DNA glycosylase that recognizes and removes damaged bases. Has a preference for oxidized purines, such as 7,8-dihydro-8-oxoguanine (8-oxoG). Has AP (apurinic/apyrimidinic) lyase activity and introduces nicks in the DNA strand. Cleaves the DNA backbone by beta-delta elimination to generate a single-strand break at the site of the removed base with both 3'- and 5'-phosphates. The sequence is that of Formamidopyrimidine-DNA glycosylase from Saccharophagus degradans (strain 2-40 / ATCC 43961 / DSM 17024).